The primary structure comprises 103 residues: Histone H4 (103 aa).

A compositionally biased stretch (gly residues) spans 1 to 14 (MSGRGKGGKGLGKG). A disordered region spans residues 1 to 20 (MSGRGKGGKGLGKGGAKRHR). The DNA-binding element occupies 17–21 (KRHRK).

Belongs to the histone H4 family. As to quaternary structure, the nucleosome is a histone octamer containing two molecules each of H2A, H2B, H3 and H4 assembled in one H3-H4 heterotetramer and two H2A-H2B heterodimers. The octamer wraps approximately 147 bp of DNA.

Its subcellular location is the nucleus. It localises to the chromosome. Functionally, core component of nucleosome. Nucleosomes wrap and compact DNA into chromatin, limiting DNA accessibility to the cellular machineries which require DNA as a template. Histones thereby play a central role in transcription regulation, DNA repair, DNA replication and chromosomal stability. DNA accessibility is regulated via a complex set of post-translational modifications of histones, also called histone code, and nucleosome remodeling. This Volvox carteri (Green alga) protein is Histone H4 (H4-I).